Reading from the N-terminus, the 74-residue chain is Large ribosomal subunit protein uL29 (74 aa).

It belongs to the universal ribosomal protein uL29 family.

In Nostoc sp. (strain PCC 7120 / SAG 25.82 / UTEX 2576), this protein is Large ribosomal subunit protein uL29.